The primary structure comprises 188 residues: Ribosome maturation factor RimP (188 aa).

This sequence belongs to the RimP family.

The protein localises to the cytoplasm. Required for maturation of 30S ribosomal subunits. This Erythrobacter litoralis (strain HTCC2594) protein is Ribosome maturation factor RimP.